A 165-amino-acid polypeptide reads, in one-letter code: Inorganic pyrophosphatase (165 aa).

3 residues coordinate substrate: lysine 21, arginine 35, and tyrosine 47. Mg(2+) is bound by residues aspartate 57, aspartate 62, and aspartate 94. Tyrosine 131 contacts substrate.

It belongs to the PPase family. As to quaternary structure, homotrimer. In presence of divalent cations the trimers aggregate to form a hexamer. Mg(2+) serves as cofactor.

Its subcellular location is the cytoplasm. The enzyme catalyses diphosphate + H2O = 2 phosphate + H(+). Functionally, catalyzes the hydrolysis of inorganic pyrophosphate (PPi) forming two phosphate ions. This is Inorganic pyrophosphatase from Bacillus sp. (strain PS3).